The sequence spans 332 residues: Adenosine receptor A2b (332 aa).

Residues 1 to 8 lie on the Extracellular side of the membrane; that stretch reads MQLETQDA. Residues 9–33 form a helical membrane-spanning segment; it reads LYVALELVIAALAVAGNVLVCAAVG. The Cytoplasmic segment spans residues 34 to 43; that stretch reads ASSALQTPTN. The chain crosses the membrane as a helical span at residues 44-67; it reads YFLVSLATADVAVGLFAIPFAITI. Over 68–78 the chain is Extracellular; it reads SLGFCTDFHSC. A disulfide bridge links C78 with C171. A helical membrane pass occupies residues 79 to 101; that stretch reads LFLACFVLVLTQSSIFSLLAVAV. The Cytoplasmic portion of the chain corresponds to 102 to 121; it reads DRYLAIRVPLRYKGLVTGTR. Residues 122–144 form a helical membrane-spanning segment; the sequence is ARGIIAVLWVLAFGIGLTPFLGW. Topologically, residues 145 to 178 are extracellular; that stretch reads NSKDRATSNCTEPGDGITNKSCCPVKCLFENVVP. Residues N153 and N163 are each glycosylated (N-linked (GlcNAc...) asparagine). E174 provides a ligand contact to adenosine. A helical transmembrane segment spans residues 179-203; the sequence is MSYMVYFNFFGCVLPPLLIMMVIYI. The Cytoplasmic segment spans residues 204–235; it reads KIFMVACKQLQHMELMEHSRTTLQREIHAAKS. The chain crosses the membrane as a helical span at residues 236–259; sequence LAMIVGIFALCWLPVHAINCITLF. N254 contacts adenosine. Topologically, residues 260-267 are extracellular; sequence HPALAKDK. Residues 268 to 291 traverse the membrane as a helical segment; that stretch reads PKWVMNVAILLSHANSVVNPIVYA. Adenosine is bound by residues S279 and H280. The Cytoplasmic segment spans residues 292-332; that stretch reads YRNRDFRYSFHRIISRYVLCQTDTKGGSGQAGGQSTFSLSL. Residue C311 is the site of S-palmitoyl cysteine attachment.

This sequence belongs to the G-protein coupled receptor 1 family.

The protein localises to the cell membrane. Receptor for adenosine. The activity of this receptor is mediated by G proteins which activate adenylyl cyclase. This Rattus norvegicus (Rat) protein is Adenosine receptor A2b (Adora2b).